We begin with the raw amino-acid sequence, 400 residues long: Enoyl-[acyl-carrier-protein] reductase [NADH] 2 (400 aa).

NAD(+)-binding positions include 48-53, 75-76, 112-113, and 141-142; these read GASSGF, FE, DA, and LA. A substrate-binding site is contributed by tyrosine 228. The Proton donor role is filled by tyrosine 238. NAD(+) contacts are provided by residues lysine 247 and 276 to 278; that span reads LVT.

The protein belongs to the TER reductase family. In terms of assembly, monomer.

It catalyses the reaction a 2,3-saturated acyl-[ACP] + NAD(+) = a (2E)-enoyl-[ACP] + NADH + H(+). Its pathway is lipid metabolism; fatty acid biosynthesis. Functionally, involved in the final reduction of the elongation cycle of fatty acid synthesis (FAS II). Catalyzes the reduction of a carbon-carbon double bond in an enoyl moiety that is covalently linked to an acyl carrier protein (ACP). This is Enoyl-[acyl-carrier-protein] reductase [NADH] 2 from Vibrio vulnificus (strain YJ016).